Consider the following 347-residue polypeptide: Olfactory receptor 1L6 (347 aa).

Over 1-62 (MSYFYRLKLM…GLSSNPQLQK (62 aa)) the chain is Extracellular. Residue Asn41 is glycosylated (N-linked (GlcNAc...) asparagine). The helical transmembrane segment at 63 to 86 (PLFAIFLIMYLLAAVGNVLIIPAI) threads the bilayer. Residues 87 to 94 (YSDPRLHT) lie on the Cytoplasmic side of the membrane. The helical transmembrane segment at 95-116 (PMYFFLSNLSFMDICFTTVIVP) threads the bilayer. Residues 117–137 (KMLVNFLSETKVISYVGCLAQ) lie on the Extracellular side of the membrane. A disulfide bridge connects residues Cys134 and Cys226. A helical membrane pass occupies residues 138-157 (MYFFMAFGNTDSYLLASMAI). Residues 158–176 (DRLVAICNPLHYDVVMKPR) lie on the Cytoplasmic side of the membrane. Residues 177-195 (HCLLMLLGSCSISHLHSLF) form a helical membrane-spanning segment. Topologically, residues 196–233 (RVLLMSRLSFCASHIIKHFFCDTQPVLKLSCSDTSSSQ) are extracellular. A helical membrane pass occupies residues 234–256 (MVVMTETLAVIVTPFLCIIFSYL). Residues 257-273 (RIMVTVLRIPSAAGKWK) are Cytoplasmic-facing. Residues 274–296 (AFSTCGSHLTAVALFYGSIIYVY) traverse the membrane as a helical segment. Residues 297–309 (FRPLSMYSVVRDR) lie on the Extracellular side of the membrane. Residues 310–329 (VATVMYTVVTPMLNPFIYSL) form a helical membrane-spanning segment. Over 330–347 (RNKDMKRGLKKLQDRIYR) the chain is Cytoplasmic.

It belongs to the G-protein coupled receptor 1 family.

It localises to the cell membrane. In terms of biological role, odorant receptor. The polypeptide is Olfactory receptor 1L6 (OR1L6) (Homo sapiens (Human)).